A 567-amino-acid chain; its full sequence is Probable transport protein (567 aa).

Residues 1–30 show a composition bias toward basic and acidic residues; the sequence is MSDRVEVNERRSDSVSEKEPARDDARKDVT. A disordered region spans residues 1–38; the sequence is MSDRVEVNERRSDSVSEKEPARDDARKDVTDDQEDAPP. The Cytoplasmic segment spans residues 1-46; it reads MSDRVEVNERRSDSVSEKEPARDDARKDVTDDQEDAPPFMTANNAR. Residues 47 to 67 traverse the membrane as a helical segment; the sequence is VMLVQAIGGSLNGYSIGFVGV. Residues 68 to 160 lie on the Extracellular side of the membrane; it reads YSTLFGYSTN…PSGYSSSESG (93 aa). The chain crosses the membrane as a helical span at residues 161–181; the sequence is IFAGSMIAGCLIGSVFAGPLA. The Cytoplasmic segment spans residues 182–189; that stretch reads SKIGARLS. Residues 190-210 traverse the membrane as a helical segment; the sequence is FLLVGLVGVVASVMYHASCAA. Over 211 to 212 the chain is Extracellular; sequence DE. The chain crosses the membrane as a helical span at residues 213–233; the sequence is FWVLIVGRFVIGLFLGVICVA. At 234–249 the chain is on the cytoplasmic side; the sequence is CPVYTDQNAHPKWKRT. Residues 250–270 traverse the membrane as a helical segment; sequence IGVMFQVFTTLGIFVAALMGL. At 271–289 the chain is on the extracellular side; the sequence is ALGQSIRFDHDGDQKVMAR. Residues 290-310 traverse the membrane as a helical segment; sequence MQGLCVFSTLFSLLTVVLGIV. Over 311–341 the chain is Cytoplasmic; sequence TRESRAKFDGGEEGRAELNPSEYGYVEMIPR. Residues 342 to 362 form a helical membrane-spanning segment; sequence LLMGCVMAGTLQLTGINAVMN. Residues 363–366 are Extracellular-facing; sequence YAPT. A helical transmembrane segment spans residues 367–387; it reads IMGSLGLAPLVGNFVVMLWNF. Residues 388–404 are Cytoplasmic-facing; it reads VTTLASIPLSYVFTMRH. Residues 405–425 form a helical membrane-spanning segment; it reads VFLFGSIFTSCMCLFMCGIPV. Over 426 to 437 the chain is Extracellular; the sequence is YPGVSKKLEAKN. Residues 438 to 458 traverse the membrane as a helical segment; that stretch reads GVAITGILLFILGFEVCVGPC. Over 459–480 the chain is Cytoplasmic; the sequence is YYVLTQDMFPPSFRPRGASFTQ. A helical transmembrane segment spans residues 481-501; the sequence is VAQFIFNLIINVCYPIATESI. Topologically, residues 502–514 are extracellular; the sequence is SGGPSGNQDKGQA. The chain crosses the membrane as a helical span at residues 515–535; the sequence is VAFIFFGGLGLICFVIQVFFL. Topologically, residues 536-567 are cytoplasmic; it reads HPWDEERDGKKVVAPAIGKKELSEESIGNRAE.

Belongs to the major facilitator superfamily. Sugar transporter (TC 2.A.1.1) family.

It is found in the membrane. Functionally, probable membrane transport protein. In Leishmania enriettii, this protein is Probable transport protein (PRO-1).